The sequence spans 258 residues: UPF0246 protein mma_1385 (258 aa).

The protein belongs to the UPF0246 family.

The protein is UPF0246 protein mma_1385 of Janthinobacterium sp. (strain Marseille) (Minibacterium massiliensis).